Here is a 1555-residue protein sequence, read N- to C-terminus: Bromodomain adjacent to zinc finger domain protein 1A (1555 aa).

The tract at residues 1 to 128 is required for association with the CHRAC1/POLE3 complex; sequence MPLLHRKPFV…EETVEVIRNN (128 aa). The tract at residues 1–128 is required for interaction with the CHRAC1-POLE3 heterodimer. Required for interaction with the CHRAC1-POLE3 heterodimer; the sequence is MPLLHRKPFV…EETVEVIRNN (128 aa). The tract at residues 1 to 133 is required for interaction with NCOR1; the sequence is MPLLHRKPFV…VIRNNGTRLQ (133 aa). Residues 22–128 form the WAC domain; the sequence is EEVFYCKVTN…EETVEVIRNN (107 aa). Residues S270 and S284 each carry the phosphoserine modification. In terms of domain architecture, DDT spans 422 to 488; that stretch reads PEVFGDALMV…LTAIFQAMAE (67 aa). Residues 635-701 adopt a coiled-coil conformation; it reads IEDYVDVLRQ…EDEQRNSAAV (67 aa). Basic and acidic residues-rich tracts occupy residues 652–664 and 671–696; these read LKAEQHRKEREAT and RKEEKLKEQEQKMKEKQEKLKEDEQR. The interval 652–751 is disordered; sequence LKAEQHRKER…KRSRRGKVGQ (100 aa). The tract at residues 668 to 935 is interaction with SMARCA5; that stretch reads IRRRKEEKLK…QEKSRICAQL (268 aa). The interval 668–935 is required for interaction with SMARCA5 and formation of the CHRAC ISWI chromatin remodeling complex; it reads IRRRKEEKLK…QEKSRICAQL (268 aa). Acidic residues-rich tracts occupy residues 705–714 and 728–737; these read GEEEREDFDT and PDVVTEDEDD. Phosphothreonine is present on T732. Residues 773-798 are a coiled coil; sequence SADAEEALRQEQQQKEKELLDKIQSA. Disordered stretches follow at residues 843–874 and 944–969; these read PSSFHNNAQPRDPQVSIKTEESFLSESTSSLD and HFSDKPQADSKPVSSRGRSSGACDIS. Residues 864-873 show a composition bias toward low complexity; the sequence is SFLSESTSSL. A Glycyl lysine isopeptide (Lys-Gly) (interchain with G-Cter in SUMO2) cross-link involves residue K954. S962 and S963 each carry phosphoserine. Residues 1149–1199 form a PHD-type zinc finger; sequence NARCKICRKKGDAENMVLCDGCDRGHHTYCVRPKLKAVPDGDWFCPECRPK. The disordered stretch occupies residues 1203 to 1429; the sequence is RRLSSRQRPS…LNRRSSGRQG (227 aa). Positions 1214–1258 are enriched in acidic residues; it reads ESDEEMEEGMEDDDDEVDDDDEEGQSEEEEYEVEQDEEDSDDDEA. Over residues 1263-1277 the composition is skewed to basic residues; that stretch reads KRGRPQVRLPIKTKG. S1282 is subject to Phosphoserine. Residues 1297 to 1313 show a composition bias toward polar residues; sequence SRSQQSTPKNTAKSASK. Phosphoserine occurs at positions 1320, 1339, 1352, 1370, 1401, 1412, and 1416. Over residues 1369 to 1386 the composition is skewed to polar residues; that stretch reads HSPSFTNFRVSTSRSSRQ. A Bromo domain is found at 1429 to 1532; that stretch reads GGVHELSAFE…AFFHIQAQKL (104 aa). Residue T1546 is modified to Phosphothreonine.

Belongs to the WAL family. Component of the ACF-1 ISWI chromatin remodeling complex at least composed of SMARCA1 and BAZ1A, which regulates the spacing of histone octamers on the DNA template to facilitate access to DNA. Within the ACF-1 ISWI chromatin remodeling complex interacts with SMARCA1; the interaction is direct. Component of the ACF-5 ISWI chromatin remodeling complex (also called the ACF complex) at least composed of BAZ1A and SMARCA5/SNF2H, which regulates the spacing of histone octamers on the DNA template to facilitate access to DNA. Within the ACF-5 ISWI chromatin remodeling complex interacts with SMARCA5/SNF2H; the interaction is direct. Component of the CHRAC ISWI chromatin remodeling complex at least composed of SMARCA5/SNF2H, BAZ1A/ACF1, CHRAC1 and POLE3; the complex preferentially binds DNA through the CHRAC1-POLE3 heterodimer and possesses ATP-dependent nucleosome-remodeling activity. Within the complex interacts (via N-terminus) with POLE3-CHRAC1 heterodimer; the interaction is direct and is required for the complex to preferentially bind to DNA. Within the complex interacts with SMARCA5/SNF2H; the interaction is direct and promotes the interaction with the POLE3-CHRAC1 heterodimer. Interacts with NCOR1 (via its RD1 domain); the interaction corepresses a number of NCOR1-regulated genes.

Its subcellular location is the nucleus. Its function is as follows. Regulatory subunit of the ATP-dependent ACF-1 and ACF-5 ISWI chromatin remodeling complexes, which form ordered nucleosome arrays on chromatin and slide edge- and center-positioned histone octamers away from their original location on the DNA template to facilitate access to DNA during DNA-templated processes such as DNA replication, transcription, and repair. Both complexes regulate the spacing of nucleosomes along the chromatin and have the ability to slide mononucleosomes to the center of a DNA template in an ATP-dependent manner. The ACF-1 ISWI chromatin remodeling complex has a lower ATP hydrolysis rate than the ACF-5 ISWI chromatin remodeling complex. Has a role in sensing the length of DNA which flank nucleosomes, which modulates the nucleosome spacing activity of the ACF-5 ISWI chromatin remodeling complex. Involved in DNA replication and together with SMARCA5/SNF2H is required for replication of pericentric heterochromatin in S-phase. May have a role in nuclear receptor-mediated transcription repression. In Mus musculus (Mouse), this protein is Bromodomain adjacent to zinc finger domain protein 1A (Baz1a).